The primary structure comprises 649 residues: 1,4-alpha-glucan branching enzyme GlgB (649 aa).

The active-site Nucleophile is Asp315. Residue Glu366 is the Proton donor of the active site.

It belongs to the glycosyl hydrolase 13 family. GlgB subfamily. In terms of assembly, monomer.

The enzyme catalyses Transfers a segment of a (1-&gt;4)-alpha-D-glucan chain to a primary hydroxy group in a similar glucan chain.. It participates in glycan biosynthesis; glycogen biosynthesis. Catalyzes the formation of the alpha-1,6-glucosidic linkages in glycogen by scission of a 1,4-alpha-linked oligosaccharide from growing alpha-1,4-glucan chains and the subsequent attachment of the oligosaccharide to the alpha-1,6 position. The polypeptide is 1,4-alpha-glucan branching enzyme GlgB (Ligilactobacillus salivarius (strain UCC118) (Lactobacillus salivarius)).